The sequence spans 356 residues: DNA polymerase IV (356 aa).

The UmuC domain occupies 7 to 188; sequence IIHIDMDCFY…LPLKKIPRVG (182 aa). Residues Asp11 and Asp106 each coordinate Mg(2+). The active site involves Glu107.

It belongs to the DNA polymerase type-Y family. In terms of assembly, monomer. Mg(2+) serves as cofactor.

Its subcellular location is the cytoplasm. It catalyses the reaction DNA(n) + a 2'-deoxyribonucleoside 5'-triphosphate = DNA(n+1) + diphosphate. Its function is as follows. Poorly processive, error-prone DNA polymerase involved in untargeted mutagenesis. Copies undamaged DNA at stalled replication forks, which arise in vivo from mismatched or misaligned primer ends. These misaligned primers can be extended by PolIV. Exhibits no 3'-5' exonuclease (proofreading) activity. May be involved in translesional synthesis, in conjunction with the beta clamp from PolIII. The polypeptide is DNA polymerase IV (Actinobacillus pleuropneumoniae serotype 5b (strain L20)).